The sequence spans 520 residues: Cholesterol side-chain cleavage enzyme, mitochondrial (520 aa).

The N-terminal 39 residues, 1–39 (MLARGLPLRSALVKACPPILSTVGEGWGHHRVGTGEGAG), are a transit peptide targeting the mitochondrion. Residue Cys-461 participates in heme binding.

The protein belongs to the cytochrome P450 family. In terms of assembly, interacts with FDX1/adrenodoxin. Heme is required as a cofactor. In terms of tissue distribution, detected in adrenal cortex and corpus luteum (at protein level).

It localises to the mitochondrion inner membrane. It catalyses the reaction 6 reduced [adrenodoxin] + cholesterol + 3 O2 + 6 H(+) = 4-methylpentanal + pregnenolone + 6 oxidized [adrenodoxin] + 4 H2O. The catalysed reaction is 2 reduced [adrenodoxin] + cholesterol + O2 + 2 H(+) = (22R)-hydroxycholesterol + 2 oxidized [adrenodoxin] + H2O. It carries out the reaction (22R)-hydroxycholesterol + 2 reduced [adrenodoxin] + O2 + 2 H(+) = (20R,22R)-20,22-dihydroxycholesterol + 2 oxidized [adrenodoxin] + H2O. The enzyme catalyses (20R,22R)-20,22-dihydroxycholesterol + 2 reduced [adrenodoxin] + O2 + 2 H(+) = 4-methylpentanal + pregnenolone + 2 oxidized [adrenodoxin] + 2 H2O. It functions in the pathway lipid metabolism; C21-steroid hormone metabolism. Its pathway is steroid metabolism; cholesterol metabolism. Its function is as follows. A cytochrome P450 monooxygenase that catalyzes the side-chain hydroxylation and cleavage of cholesterol to pregnenolone, the precursor of most steroid hormones. Catalyzes three sequential oxidation reactions of cholesterol, namely the hydroxylation at C22 followed with the hydroxylation at C20 to yield 20R,22R-hydroxycholesterol that is further cleaved between C20 and C22 to yield the C21-steroid pregnenolone and 4-methylpentanal. Mechanistically, uses molecular oxygen inserting one oxygen atom into a substrate and reducing the second into a water molecule. Two electrons are provided by NADPH via a two-protein mitochondrial transfer system comprising flavoprotein FDXR (adrenodoxin/ferredoxin reductase) and nonheme iron-sulfur protein FDX1 or FDX2 (adrenodoxin/ferredoxin). The polypeptide is Cholesterol side-chain cleavage enzyme, mitochondrial (CYP11A1) (Bos taurus (Bovine)).